An 81-amino-acid chain; its full sequence is Accessory gland protein Acp63F (81 aa).

Residues Met-1–Ala-16 form the signal peptide.

Main cells of accessory gland and seminal fluid.

It localises to the secreted. Its function is as follows. Responsible for physiological and behavioral changes in mated female flies. This Drosophila melanogaster (Fruit fly) protein is Accessory gland protein Acp63F (Acp63F).